Here is a 299-residue protein sequence, read N- to C-terminus: Putative glycylpeptide N-tetradecanoyltransferase (299 aa).

This sequence belongs to the NMT family.

It catalyses the reaction N-terminal glycyl-[protein] + tetradecanoyl-CoA = N-tetradecanoylglycyl-[protein] + CoA + H(+). Adds a myristoyl group to the N-terminal glycine residue of certain proteins. This chain is Putative glycylpeptide N-tetradecanoyltransferase, found in Amsacta moorei entomopoxvirus (AmEPV).